Reading from the N-terminus, the 555-residue chain is AP2-like ethylene-responsive transcription factor ANT (555 aa).

2 disordered regions span residues 34 to 56 (GGREAIYSSSTSSAATSSSSVPP) and 199 to 231 (LSMSPGSQSSCITGSHHHQQNQNQNHQSQNHQQ). Low complexity-rich tracts occupy residues 41–53 (SSSTSSAATSSSS), 199–208 (LSMSPGSQSS), and 218–231 (QNQNQNHQSQNHQQ). DNA-binding regions (AP2/ERF) lie at residues 283-349 (QYRG…TNFS) and 385-443 (IYRG…TNFD).

It belongs to the AP2/ERF transcription factor family. AP2 subfamily. In terms of assembly, interacts with ANL2, HDG2 and HDG10, and possibly with GL2, HDG3, HDG8, ATML1 and PDF2. As to expression, mostly expressed in developing flowers. Also present in mature flowers, siliques and seedlings, but not in mature roots, leaves and stems. Expressed in ovules and in vegetative and floral primordia.

It is found in the nucleus. Functionally, transcription activator that recognizes and binds to the DNA consensus sequence 5'-CAC[AG]N[AT]TNCCNANG-3'. Required for the initiation and growth of ovules integumenta, and for the development of female gametophyte. Plays a critical role in the development of gynoecium marginal tissues (e.g. stigma, style and septa), and in the fusion of carpels and of medial ridges leading to ovule primordia. Also involved in organs initiation and development, including floral organs. Maintains the meristematic competence of cells and consequently sustains expression of cell cycle regulators during organogenesis, thus controlling the final size of each organ by controlling their cell number. Regulates INO autoinduction and expression pattern. As ANT promotes petal cell identity and mediates down-regulation of AG in flower whorl 2, it functions as a class A homeotic gene. This is AP2-like ethylene-responsive transcription factor ANT from Arabidopsis thaliana (Mouse-ear cress).